A 98-amino-acid chain; its full sequence is Large ribosomal subunit protein uL23 (98 aa).

The protein belongs to the universal ribosomal protein uL23 family. As to quaternary structure, part of the 50S ribosomal subunit. Contacts protein L29, and trigger factor when it is bound to the ribosome.

Functionally, one of the early assembly proteins it binds 23S rRNA. One of the proteins that surrounds the polypeptide exit tunnel on the outside of the ribosome. Forms the main docking site for trigger factor binding to the ribosome. The chain is Large ribosomal subunit protein uL23 from Hydrogenovibrio crunogenus (strain DSM 25203 / XCL-2) (Thiomicrospira crunogena).